Here is a 314-residue protein sequence, read N- to C-terminus: Cathepsin L 1 (314 aa).

The first 24 residues, 1–24, serve as a signal peptide directing secretion; the sequence is MMLLGASLYLNNTQEVSDEIDTAN. The propeptide at 25 to 109 is activation peptide; that stretch reads LYANWKMKYN…NAANSNFQYK (85 aa). 3 cysteine pairs are disulfide-bonded: Cys132–Cys175, Cys166–Cys207, and Cys259–Cys302. Residue Cys135 is part of the active site. Active-site residues include His265 and Asn282.

The protein belongs to the peptidase C1 family.

It localises to the secreted. The catalysed reaction is Specificity close to that of papain. As compared to cathepsin B, cathepsin L exhibits higher activity toward protein substrates, but has little activity on Z-Arg-Arg-NHMec, and no peptidyl-dipeptidase activity.. Its function is as follows. May be involved in extracellular digestion. This chain is Cathepsin L 1, found in Paramecium tetraurelia.